The sequence spans 1128 residues: Nck-associated protein 1 (1128 aa).

Residues 640 to 665 form a disordered region; it reads AVNKKSKKQTGKKGEPEREKPGVESM. Positions 651–665 are enriched in basic and acidic residues; that stretch reads KKGEPEREKPGVESM. Residues 995–1015 form a helical membrane-spanning segment; that stretch reads IACLLMVFVAVSMPTLASNVM.

The protein belongs to the HEM-1/HEM-2 family.

Its subcellular location is the cell membrane. It is found in the cell projection. The protein localises to the lamellipodium membrane. In terms of biological role, part of the WAVE complex that regulates lamellipodia formation. The WAVE complex regulates actin filament reorganization via its interaction with the Arp2/3 complex. Actin remodeling activity is regulated by RAC1. Plays a role in neural tube closure. In Danio rerio (Zebrafish), this protein is Nck-associated protein 1 (nckap1).